We begin with the raw amino-acid sequence, 131 residues long: Methylglyoxal synthase (131 aa).

The region spanning 1 to 131 (MKIALIAHDK…GDLDYRKLRK (131 aa)) is the MGS-like domain. Residues H8, K12, 34–37 (TGTT), and 54–55 (SG) contribute to the substrate site. D60 functions as the Proton donor/acceptor in the catalytic mechanism. H87 provides a ligand contact to substrate.

This sequence belongs to the methylglyoxal synthase family.

The catalysed reaction is dihydroxyacetone phosphate = methylglyoxal + phosphate. Catalyzes the formation of methylglyoxal from dihydroxyacetone phosphate. This is Methylglyoxal synthase from Bacillus cereus (strain ATCC 14579 / DSM 31 / CCUG 7414 / JCM 2152 / NBRC 15305 / NCIMB 9373 / NCTC 2599 / NRRL B-3711).